Consider the following 224-residue polypeptide: Propanediol dehydratase medium subunit (224 aa).

The tract at residues 1–18 is targets protein to the BMC; the sequence is MEINEKLLRQIIEDVLSE.

This sequence belongs to the diol/glycerol dehydratase medium subunit family. In terms of assembly, the propanediol dehydratase enzyme is a heterotrimeric complex composed of a large (PduC), a medium (PduD) and a small (PduE) subunit. Requires adenosylcob(III)alamin as cofactor.

Its subcellular location is the bacterial microcompartment. It catalyses the reaction propane-1,2-diol = propanal + H2O. The protein operates within polyol metabolism; 1,2-propanediol degradation. Its function is as follows. Part of the PduCDE complex that catalyzes the dehydration of 1,2-propanediol (1,2-PD) to propionaldehyde. This subunit is directly targeted to the bacterial microcompartment (BMC). In terms of biological role, expression of a cosmid containing the full 21-gene pdu operon in E.coli allows E.coli to grow on 1,2-propanediol (1,2-PD) with the appearance of BMCs in its cytoplasm. The 1,2-PD-specific bacterial microcompartment (BMC) concentrates low levels of 1,2-PD catabolic enzymes, concentrates volatile reaction intermediates thus enhancing pathway flux and keeps the level of toxic, mutagenic propionaldehyde low. In Citrobacter freundii, this protein is Propanediol dehydratase medium subunit.